The primary structure comprises 901 residues: MLIPSKLSRPVRLEHTVVRERLLAKLSGANNYRLVLITSPAGYGKTTLISQWAAGKNDLGWFSLDEGDNQQERFASYLIAAIQQATGNHCAASEAMVQKRQYASLSSLFAQLFIELADWQRPLYLVIDDYHLINNPVIHDAMRFFLRHQPENMTLVVLSRNLPQLGIANLRVRDQLLEIGSQQLAFTHQEAKQFFDCRLTSPIEADDSSRLCDDVAGWATALQLIALSARQNNSSAQHSARRFAGINASHLSDYLVDEVLDNVDARTRNFLLKSSLLRSMNDALIVRVTGEENGQMQLEEIERQGLFLQRMDDSGEWFRYHPLFGSFLRQRCQWELAVELPEIHRAAAESWMAQGFPSEAIHHALAAGDAKMLRDILLNHAWGMFNHSELGLLEQSLAALPWSNLLENPRLILLQAWLMQSQHRYSEVNTLLARAEQEMSVEMDTAMHGDFNALRAQVAINDGDQDEAERLSMVALEELPLANYYSRIVATSVHGEVLHCKGKLTKSLAVMQQTEQMARRHDVWHYALWSIIQQSEILFAQGFLQAAWESQEKAFQLVREQHLEQLPMHEFLLRIRSQLLWAWARLDEAEACARQGMDVLSTYQPQQQLQCLALMVQCSLARGDLDNARSHLNRLENLLGNGHYHSDWVSNADKVRVIYWQMTGDKTAAANWLRQTPKPEFANNHFLQSQWRNIARAQILLGDFEPAEMVLEELNENARSLRLMSDLNRNLLLLNQLYWQSGRKSEAQKALLEALTLANRTGFINHFVIEGEAMAQQLRQLIQLNTLPELEQHRAQRILRDINQHHRHKFAHFDEGFVERLLNHPEVPELIRTSPLTQREWQVLGLIYSGYSNEQIAGELDVAATTIKTHIRNLYQKLGVAHRQDAVQHAQQLLKMMGYGV.

Residue serine 39–threonine 46 participates in ATP binding. The 66-residue stretch at glutamate 829 to leucine 894 folds into the HTH luxR-type domain. The segment at residues asparagine 853–arginine 872 is a DNA-binding region (H-T-H motif).

The protein belongs to the MalT family. Monomer in solution. Oligomerizes to an active state in the presence of the positive effectors ATP and maltotriose.

Activated by ATP and maltotriose, which are both required for DNA binding. Its function is as follows. Positively regulates the transcription of the maltose regulon whose gene products are responsible for uptake and catabolism of malto-oligosaccharides. Specifically binds to the promoter region of its target genes, recognizing a short DNA motif called the MalT box. In Klebsiella pneumoniae subsp. pneumoniae (strain ATCC 700721 / MGH 78578), this protein is HTH-type transcriptional regulator MalT.